The following is a 146-amino-acid chain: uncharacterized protein (146 aa).

This is an uncharacterized protein from Acidianus filamentous virus 2 (isolate Italy/Pozzuoli) (AFV-2).